Here is a 787-residue protein sequence, read N- to C-terminus: MNRKNVIRMVTAIAVVVLLGWSFFYFSDDTRGYKFVDTSVAMSQINGHNVKSAQIDDREQQLRLTLKKGNNDTDGSDKVITKYPTGYAVDLFNALSAKNTKVTTAVNEGSILGELLVYVLPLLLLVGLFVMFSRMQGGARMGFGFGKSRAKQLSKDMPKTTFADVAGVDEAVEELYEIKDFLQNPCRYQTLGAKIPKGVLLYGPPGTGKTLLARAVAGEAGVPFFTISGSDFVEMFVGVGASRVRDLFDQAKQNSPCIIFVDEIDAVGRQRGTGLGGGHDEREQTLNQLLVEMDGFGDRAGVILIAATNRPDILDPALLRPGRFDRQIPVSNPDLAGRRAVLRVHSKGKPIADDADLDGLAKRTVGMTGADLANVVNEAALLTARENGLVITGPALEEAVDRVIGGPRRKGRIISEQEKKITAYHEGGHTLAAWAMPDIEPIYKVTILARGRTGGHAVAVPEEDKGLRTRSEMIAQLVFAMGGRAAEELVFREPTTGAVSDIEKATKIARSMVTEFGMSSKLGAVRYGSEHGDPFLGRTMGTQADYSHEVARDIDDEVRKLIEAAHTEAWEILTEYRDVLDTLAGELLEKETLHRPELEGIFASVEKRPRLTMFDDFGGRIPSDKPPIKTPGELAIERGEPWPQPVPEPAFKAAIARASQAAEASHQAAQSDTDGPPGQGANGSHAGDRQRQHGPTQPDYGAPPGWHAPGWPPQQPPDYWYPPEQQPSQSPYWPQPAPSYPGQAPPPYPSYPPCPSYPPPGQSAPDAGKPPAQLDEGVSPSNPPAHG.

The Cytoplasmic segment spans residues 1–5 (MNRKN). A helical membrane pass occupies residues 6-26 (VIRMVTAIAVVVLLGWSFFYF). Residues 27 to 110 (SDDTRGYKFV…KVTTAVNEGS (84 aa)) are Extracellular-facing. Residues 111 to 131 (ILGELLVYVLPLLLLVGLFVM) traverse the membrane as a helical segment. At 132–787 (FSRMQGGARM…VSPSNPPAHG (656 aa)) the chain is on the cytoplasmic side. 203-210 (GPPGTGKT) is a binding site for ATP. A Zn(2+)-binding site is contributed by H425. Residue E426 is part of the active site. H429 and D501 together coordinate Zn(2+). The interval 616–787 (DFGGRIPSDK…VSPSNPPAHG (172 aa)) is disordered. 2 stretches are compositionally biased toward low complexity: residues 650–671 (AFKA…AAQS) and 700–709 (YGAPPGWHAP). Pro residues predominate over residues 710-720 (GWPPQQPPDYW). Over residues 721–732 (YPPEQQPSQSPY) the composition is skewed to low complexity. Pro residues predominate over residues 733–762 (WPQPAPSYPGQAPPPYPSYPPCPSYPPPGQ).

The protein in the central section; belongs to the AAA ATPase family. It in the C-terminal section; belongs to the peptidase M41 family. Homohexamer. The cofactor is Zn(2+).

The protein resides in the cell membrane. Its function is as follows. Acts as a processive, ATP-dependent zinc metallopeptidase for both cytoplasmic and membrane proteins. Plays a role in the quality control of integral membrane proteins. The polypeptide is ATP-dependent zinc metalloprotease FtsH (Mycobacterium leprae (strain TN)).